The following is a 292-amino-acid chain: Phosphoribulokinase, chromosomal (292 aa).

Residue Gly-12–Ser-20 participates in ATP binding.

This sequence belongs to the phosphoribulokinase family. In terms of assembly, homooctamer.

The enzyme catalyses D-ribulose 5-phosphate + ATP = D-ribulose 1,5-bisphosphate + ADP + H(+). It functions in the pathway carbohydrate biosynthesis; Calvin cycle. The protein is Phosphoribulokinase, chromosomal (cfxP) of Cupriavidus necator (strain ATCC 17699 / DSM 428 / KCTC 22496 / NCIMB 10442 / H16 / Stanier 337) (Ralstonia eutropha).